The following is a 365-amino-acid chain: Uroporphyrinogen decarboxylase (365 aa).

Residues arginine 27–arginine 31, aspartate 77, tyrosine 154, serine 209, and histidine 327 contribute to the substrate site.

It belongs to the uroporphyrinogen decarboxylase family. In terms of assembly, homodimer.

Its subcellular location is the cytoplasm. The catalysed reaction is uroporphyrinogen III + 4 H(+) = coproporphyrinogen III + 4 CO2. Its pathway is porphyrin-containing compound metabolism; protoporphyrin-IX biosynthesis; coproporphyrinogen-III from 5-aminolevulinate: step 4/4. Its function is as follows. Catalyzes the decarboxylation of four acetate groups of uroporphyrinogen-III to yield coproporphyrinogen-III. This chain is Uroporphyrinogen decarboxylase, found in Alkalilimnicola ehrlichii (strain ATCC BAA-1101 / DSM 17681 / MLHE-1).